Consider the following 1060-residue polypeptide: DNA-directed RNA polymerase subunit beta (1060 aa).

It belongs to the RNA polymerase beta chain family. In terms of assembly, in plastids the minimal PEP RNA polymerase catalytic core is composed of four subunits: alpha, beta, beta', and beta''. When a (nuclear-encoded) sigma factor is associated with the core the holoenzyme is formed, which can initiate transcription.

It localises to the plastid. The protein localises to the chloroplast. It catalyses the reaction RNA(n) + a ribonucleoside 5'-triphosphate = RNA(n+1) + diphosphate. Functionally, DNA-dependent RNA polymerase catalyzes the transcription of DNA into RNA using the four ribonucleoside triphosphates as substrates. The sequence is that of DNA-directed RNA polymerase subunit beta from Lactuca sativa (Garden lettuce).